Here is a 194-residue protein sequence, read N- to C-terminus: Recombination protein RecR (194 aa).

The C4-type zinc-finger motif lies at 55 to 70 (CRECGNLAEGELCPIC). The Toprim domain occupies 78 to 171 (SLLAVVESVA…RVTRPAYGLP (94 aa)).

Belongs to the RecR family.

Functionally, may play a role in DNA repair. It seems to be involved in an RecBC-independent recombinational process of DNA repair. It may act with RecF and RecO. The polypeptide is Recombination protein RecR (Thermus thermophilus (strain ATCC BAA-163 / DSM 7039 / HB27)).